A 344-amino-acid polypeptide reads, in one-letter code: MTQKLTITRPDDWHLHLRDGAALAAVLPDTARQFARAIIMPNLKPPVTTVDQASAYRARILAALPAGMAFEPLMTLYLTDNTPPEEIVAARASGFVHGVKLYPAGATTNSDAGVTDIRRCAATLEAMQREGVPLLVHGEVTDGDIDIFDREAVFIDRVMKPLRRDFPELKVVFEHITTRDAAQYVAEAEGPVGATITAHHLLYNRNAIFTGGIRPHYYCLPVLKREIHREALVKAATSGSPRFFLGTDSAPHARGLKEHACGCAGCYTALHAMELYAEAFDAAGALDKLEAFSSFNGPAFYGLPRNSGTLTLTREDWELPAELPYGDTTLVPLRAGETLRWKAS.

Zn(2+) contacts are provided by H14 and H16. Substrate contacts are provided by residues 16-18 and N42; that span reads HLR. Zn(2+)-binding residues include K100, H137, and H175. K100 is subject to N6-carboxylysine. H137 is a binding site for substrate. L220 is a binding site for substrate. D248 contributes to the Zn(2+) binding site. D248 is an active-site residue. Substrate-binding residues include H252 and A264.

Belongs to the metallo-dependent hydrolases superfamily. DHOase family. Class II DHOase subfamily. As to quaternary structure, homodimer. Zn(2+) is required as a cofactor.

It catalyses the reaction (S)-dihydroorotate + H2O = N-carbamoyl-L-aspartate + H(+). It functions in the pathway pyrimidine metabolism; UMP biosynthesis via de novo pathway; (S)-dihydroorotate from bicarbonate: step 3/3. In terms of biological role, catalyzes the reversible cyclization of carbamoyl aspartate to dihydroorotate. The sequence is that of Dihydroorotase from Cupriavidus metallidurans (strain ATCC 43123 / DSM 2839 / NBRC 102507 / CH34) (Ralstonia metallidurans).